The following is a 323-amino-acid chain: Acetyl esterase (323 aa).

Residues 91 to 93 (HGG) carry the Involved in the stabilization of the negatively charged intermediate by the formation of the oxyanion hole motif. Catalysis depends on residues Ser-165, Asp-262, and His-292.

It belongs to the 'GDXG' lipolytic enzyme family. In terms of assembly, homodimer. Interacts with MalT and MelA.

It is found in the cytoplasm. In terms of biological role, displays esterase activity towards short chain fatty esters (acyl chain length of up to 8 carbons). Able to hydrolyze triacetylglycerol (triacetin) and tributyrylglycerol (tributyrin), but not trioleylglycerol (triolein) or cholesterol oleate. Negatively regulates MalT activity by antagonizing maltotriose binding. Inhibits MelA galactosidase activity. The polypeptide is Acetyl esterase (Salmonella paratyphi B (strain ATCC BAA-1250 / SPB7)).